The primary structure comprises 248 residues: Sperm-specific protein Don juan (248 aa).

Positions 82–147 form a coiled coil; it reads KEGNQDELEN…EKKTKCAKKD (66 aa). Residues 146–200 form a disordered region; the sequence is KDPCKKKDPCKKKDPCKKKDPCKKKDPCKKKDPCKKKDPCKKKDPCKKKGGDLKK. Tandem repeats lie at residues 147–152, 153–158, 159–164, 165–170, 171–176, 177–182, 183–188, and 189–194. The tract at residues 147–194 is 8 X 6 AA tandem repeat of D-P-C-K-K-K; sequence DPCKKKDPCKKKDPCKKKDPCKKKDPCKKKDPCKKKDPCKKKDPCKKK. Residues 197-244 are a coiled coil; it reads DLKKKCKKLAEKEKCKKLAKKEKMKKLQKKCKKMAQKEKCKKMAKKDK.

As to expression, expression limited to post-meiotic male germ cells. Expressed in elongated spermatids during individualization and in finally elongated nuclei of spermatids. After completion of nuclear shaping it is no longer expressed in the sperm heads with the onset of individualization.

The protein resides in the nucleus. Its subcellular location is the mitochondrion. Its function is as follows. May be involved in the final steps of mitochondrial differentiation within the flagellum. The protein is Sperm-specific protein Don juan (dj) of Drosophila melanogaster (Fruit fly).